The chain runs to 499 residues: Lysine--tRNA ligase (499 aa).

Positions 408 and 415 each coordinate Mg(2+).

The protein belongs to the class-II aminoacyl-tRNA synthetase family. As to quaternary structure, homodimer. The cofactor is Mg(2+).

The protein localises to the cytoplasm. The catalysed reaction is tRNA(Lys) + L-lysine + ATP = L-lysyl-tRNA(Lys) + AMP + diphosphate. This Bacillus mycoides (strain KBAB4) (Bacillus weihenstephanensis) protein is Lysine--tRNA ligase.